The sequence spans 469 residues: L-seryl-tRNA(Sec) selenium transferase (469 aa).

Lys298 is modified (N6-(pyridoxal phosphate)lysine).

It belongs to the SelA family. It depends on pyridoxal 5'-phosphate as a cofactor.

Its subcellular location is the cytoplasm. It carries out the reaction L-seryl-tRNA(Sec) + selenophosphate + H(+) = L-selenocysteinyl-tRNA(Sec) + phosphate. It participates in aminoacyl-tRNA biosynthesis; selenocysteinyl-tRNA(Sec) biosynthesis; selenocysteinyl-tRNA(Sec) from L-seryl-tRNA(Sec) (bacterial route): step 1/1. Functionally, converts seryl-tRNA(Sec) to selenocysteinyl-tRNA(Sec) required for selenoprotein biosynthesis. The polypeptide is L-seryl-tRNA(Sec) selenium transferase (Nitratidesulfovibrio vulgaris (strain ATCC 29579 / DSM 644 / CCUG 34227 / NCIMB 8303 / VKM B-1760 / Hildenborough) (Desulfovibrio vulgaris)).